The sequence spans 223 residues: Small ribosomal subunit protein uS11m (223 aa).

The N-terminal 38 residues, M1–S38, are a transit peptide targeting the mitochondrion.

Belongs to the universal ribosomal protein uS11 family. Component of the mitochondrial small ribosomal subunit (mt-SSU). Mature yeast 74S mitochondrial ribosomes consist of a small (37S) and a large (54S) subunit. The 37S small subunit contains a 15S ribosomal RNA (15S mt-rRNA) and at least 32 different proteins. The 54S large subunit contains a 21S rRNA (21S mt-rRNA) and at least 45 different proteins.

The protein resides in the mitochondrion. Its function is as follows. Component of the mitochondrial ribosome (mitoribosome), a dedicated translation machinery responsible for the synthesis of mitochondrial genome-encoded proteins, including at least some of the essential transmembrane subunits of the mitochondrial respiratory chain. The mitoribosomes are attached to the mitochondrial inner membrane and translation products are cotranslationally integrated into the membrane. The protein is Small ribosomal subunit protein uS11m (mrps18) of Schizosaccharomyces pombe (strain 972 / ATCC 24843) (Fission yeast).